We begin with the raw amino-acid sequence, 712 residues long: Ribosomal RNA large subunit methyltransferase K/L (712 aa).

Residues 46-157 (GAYQALLHSR…RENMVVSLDL (112 aa)) enclose the THUMP domain.

The protein belongs to the methyltransferase superfamily. RlmKL family.

The protein localises to the cytoplasm. The catalysed reaction is guanosine(2445) in 23S rRNA + S-adenosyl-L-methionine = N(2)-methylguanosine(2445) in 23S rRNA + S-adenosyl-L-homocysteine + H(+). It carries out the reaction guanosine(2069) in 23S rRNA + S-adenosyl-L-methionine = N(2)-methylguanosine(2069) in 23S rRNA + S-adenosyl-L-homocysteine + H(+). Its function is as follows. Specifically methylates the guanine in position 2445 (m2G2445) and the guanine in position 2069 (m7G2069) of 23S rRNA. This is Ribosomal RNA large subunit methyltransferase K/L from Actinobacillus pleuropneumoniae serotype 5b (strain L20).